A 292-amino-acid polypeptide reads, in one-letter code: Ribosomal RNA small subunit methyltransferase A (292 aa).

S-adenosyl-L-methionine-binding residues include N28, L30, G55, E76, D101, and N126.

Belongs to the class I-like SAM-binding methyltransferase superfamily. rRNA adenine N(6)-methyltransferase family. RsmA subfamily.

The protein resides in the cytoplasm. The catalysed reaction is adenosine(1518)/adenosine(1519) in 16S rRNA + 4 S-adenosyl-L-methionine = N(6)-dimethyladenosine(1518)/N(6)-dimethyladenosine(1519) in 16S rRNA + 4 S-adenosyl-L-homocysteine + 4 H(+). Functionally, specifically dimethylates two adjacent adenosines (A1518 and A1519) in the loop of a conserved hairpin near the 3'-end of 16S rRNA in the 30S particle. May play a critical role in biogenesis of 30S subunits. This is Ribosomal RNA small subunit methyltransferase A from Bacillus cytotoxicus (strain DSM 22905 / CIP 110041 / 391-98 / NVH 391-98).